The chain runs to 602 residues: Elongation factor 4 (602 aa).

A tr-type G domain is found at 7-189; sequence SKIRNFCIIA…AIVRRVPAPQ (183 aa). GTP-binding positions include 19–24 and 136–139; these read DHGKST and NKVD.

It belongs to the TRAFAC class translation factor GTPase superfamily. Classic translation factor GTPase family. LepA subfamily.

It is found in the cell inner membrane. It catalyses the reaction GTP + H2O = GDP + phosphate + H(+). Its function is as follows. Required for accurate and efficient protein synthesis under certain stress conditions. May act as a fidelity factor of the translation reaction, by catalyzing a one-codon backward translocation of tRNAs on improperly translocated ribosomes. Back-translocation proceeds from a post-translocation (POST) complex to a pre-translocation (PRE) complex, thus giving elongation factor G a second chance to translocate the tRNAs correctly. Binds to ribosomes in a GTP-dependent manner. This is Elongation factor 4 from Prochlorococcus marinus (strain MIT 9312).